A 116-amino-acid polypeptide reads, in one-letter code: NADH-ubiquinone oxidoreductase chain 3 (116 aa).

3 helical membrane-spanning segments follow: residues 6–26, 56–76, and 85–105; these read FMLLLSLTLSIILTTINFWLA, FFLVAILFLLFDLEIALLLPL, and PLLTLLWTSILLLLLTLGLVY.

It belongs to the complex I subunit 3 family.

The protein resides in the mitochondrion membrane. It catalyses the reaction a ubiquinone + NADH + 5 H(+)(in) = a ubiquinol + NAD(+) + 4 H(+)(out). Its function is as follows. Core subunit of the mitochondrial membrane respiratory chain NADH dehydrogenase (Complex I) that is believed to belong to the minimal assembly required for catalysis. Complex I functions in the transfer of electrons from NADH to the respiratory chain. The immediate electron acceptor for the enzyme is believed to be ubiquinone. This Struthio camelus (Common ostrich) protein is NADH-ubiquinone oxidoreductase chain 3 (MT-ND3).